We begin with the raw amino-acid sequence, 71 residues long: Conotoxin LvVIB (71 aa).

A signal peptide spans 1–17 (VLIIAVLFLTASELVTA). A propeptide spanning residues 18 to 41 (DYTRDKWQYRAASLRDAMRNFRDT) is cleaved from the precursor. Disulfide bonds link Cys43–Cys57, Cys50–Cys62, and Cys56–Cys69.

The protein belongs to the conotoxin O1 superfamily. In terms of tissue distribution, expressed by the venom duct.

The protein localises to the secreted. The chain is Conotoxin LvVIB from Conus lividus (Livid cone).